Here is a 437-residue protein sequence, read N- to C-terminus: Glutamyl-tRNA reductase (437 aa).

Residues 46 to 49, serine 97, 102 to 104, and glutamine 108 contribute to the substrate site; these read TCNR and EEQ. Cysteine 47 (nucleophile) is an active-site residue. 177-182 contributes to the NADP(+) binding site; it reads GAGEMG. Positions 410-437 are disordered; the sequence is NGRVSEGKDAKVEEGKPEVDVQRSKAES. Residues 414-437 show a composition bias toward basic and acidic residues; that stretch reads SEGKDAKVEEGKPEVDVQRSKAES.

The protein belongs to the glutamyl-tRNA reductase family. In terms of assembly, homodimer.

It carries out the reaction (S)-4-amino-5-oxopentanoate + tRNA(Glu) + NADP(+) = L-glutamyl-tRNA(Glu) + NADPH + H(+). Its pathway is porphyrin-containing compound metabolism; protoporphyrin-IX biosynthesis; 5-aminolevulinate from L-glutamyl-tRNA(Glu): step 1/2. Its function is as follows. Catalyzes the NADPH-dependent reduction of glutamyl-tRNA(Glu) to glutamate 1-semialdehyde (GSA). The polypeptide is Glutamyl-tRNA reductase (Archaeoglobus fulgidus (strain ATCC 49558 / DSM 4304 / JCM 9628 / NBRC 100126 / VC-16)).